We begin with the raw amino-acid sequence, 153 residues long: Protein Smg homolog (153 aa).

It belongs to the Smg family.

The chain is Protein Smg homolog from Neisseria meningitidis serogroup B (strain ATCC BAA-335 / MC58).